Here is a 361-residue protein sequence, read N- to C-terminus: MNSVVTRAAIEPRPQAAAEEVVRLIDVKRRFGATPALDGISLNVNRGEILGIIGRSGAGKSTLIRCLNGLERADSGEIRIEGRDITGLQEQELQPLRGRIGMIFQHFNLLSAKTVEDNVALPLKIEGIAKAERLQRAHELLEVVGLADKAQAYPASLSGGQKQRVGIARALAARPALLLSDEATSALDPETTRSILALLRDINRKLGLTILLITHEMEVVRGIADRVAVIDAGRIVEEGQVWSVFANPQTDITRSLLGGIRPQLPDHILSRLSATTGSEVILSVDLAGPEAQGALFAELSAALPHSFRLVHGGIDHIQNQPVARFFIAVPAHEPALAGKVEQFLTARSARVEVLGYDTGHA.

The ABC transporter domain occupies 22 to 257 (VRLIDVKRRF…PQTDITRSLL (236 aa)). 54–61 (GRSGAGKS) provides a ligand contact to ATP.

The protein belongs to the ABC transporter superfamily. Methionine importer (TC 3.A.1.24) family. As to quaternary structure, the complex is composed of two ATP-binding proteins (MetN), two transmembrane proteins (MetI) and a solute-binding protein (MetQ).

It localises to the cell inner membrane. The enzyme catalyses L-methionine(out) + ATP + H2O = L-methionine(in) + ADP + phosphate + H(+). The catalysed reaction is D-methionine(out) + ATP + H2O = D-methionine(in) + ADP + phosphate + H(+). Functionally, part of the ABC transporter complex MetNIQ involved in methionine import. Responsible for energy coupling to the transport system. This is Methionine import ATP-binding protein MetN from Rhizobium etli (strain ATCC 51251 / DSM 11541 / JCM 21823 / NBRC 15573 / CFN 42).